The sequence spans 550 residues: Metal transporter Nramp3 (550 aa).

The span at 1 to 26 (MSGPMQRSSQPQFISSVERNNQSNGP) shows a compositional bias: polar residues. The interval 1-30 (MSGPMQRSSQPQFISSVERNNQSNGPGTPL) is disordered. 12 helical membrane passes run 50–70 (LFSYIGPGFLVSIAYIDPGNF), 83–103 (ELLWIILIASCAALIIQSLAA), 127–147 (FILWILAELAVVACDIPEVIG), 158–178 (IPVWCGVLITGLSTLMLLLLQ), 185–205 (LEFLIAILVSLIATCFLVELG), 233–253 (ISLLGAMVMPHNLFLHSALVL), 276–296 (AFALTIAFLINISIISVSGAV), 333–353 (LFAVALLASGQSSTITGTYAG), 368–390 (WIRNLLTRSLAILPSLIVSIIGG), 397–417 (LIIIASMILSFELPFALVPLL), 435–455 (ISVITWGIGSFIVVINTYFLI), and 473–493 (VFSGIFGFLGMLIYMAAILYL). The disordered stretch occupies residues 523–550 (GEGSLGHLPREDISSMQLPQQRTASDLD). Residues 536–550 (SSMQLPQQRTASDLD) are compositionally biased toward polar residues.

This sequence belongs to the NRAMP (TC 2.A.55) family.

Its subcellular location is the membrane. Probable metal transporter. In Oryza sativa subsp. japonica (Rice), this protein is Metal transporter Nramp3 (NRAMP3).